Reading from the N-terminus, the 396-residue chain is Elongation factor Tu (396 aa).

A tr-type G domain is found at 10-206 (KPHVNVGTIG…ALDTYIPTPE (197 aa)). The G1 stretch occupies residues 19–26 (GHVDHGKT). 19–26 (GHVDHGKT) provides a ligand contact to GTP. A Mg(2+)-binding site is contributed by threonine 26. The tract at residues 60–64 (GITIN) is G2. A G3 region spans residues 81-84 (DCPG). Residues 81–85 (DCPGH) and 136–139 (NKAD) each bind GTP. The tract at residues 136–139 (NKAD) is G4. The segment at 174 to 176 (SAK) is G5.

The protein belongs to the TRAFAC class translation factor GTPase superfamily. Classic translation factor GTPase family. EF-Tu/EF-1A subfamily. Monomer.

Its subcellular location is the cytoplasm. The catalysed reaction is GTP + H2O = GDP + phosphate + H(+). Its function is as follows. GTP hydrolase that promotes the GTP-dependent binding of aminoacyl-tRNA to the A-site of ribosomes during protein biosynthesis. The polypeptide is Elongation factor Tu (Bordetella avium (strain 197N)).